The sequence spans 208 residues: Outer-membrane lipoprotein carrier protein (208 aa).

A signal peptide spans 1-22; it reads MLKPLSQLVCALPLVVAASSYA.

It belongs to the LolA family. Monomer.

It localises to the periplasm. Its function is as follows. Participates in the translocation of lipoproteins from the inner membrane to the outer membrane. Only forms a complex with a lipoprotein if the residue after the N-terminal Cys is not an aspartate (The Asp acts as a targeting signal to indicate that the lipoprotein should stay in the inner membrane). In Shewanella loihica (strain ATCC BAA-1088 / PV-4), this protein is Outer-membrane lipoprotein carrier protein.